The following is a 491-amino-acid chain: Sucrose transport protein SUC7 (491 aa).

Residues 1-13 (MSDLQANKDETTV) are compositionally biased toward basic and acidic residues. Residues 1 to 25 (MSDLQANKDETTVDRQSSSSVDLDG) form a disordered region. At 1 to 32 (MSDLQANKDETTVDRQSSSSVDLDGPSPLRKM) the chain is on the cytoplasmic side. Residue serine 17 is modified to Phosphoserine. A helical membrane pass occupies residues 33 to 53 (ISVASIAAGIQFGWALQLSLL). Residues 54–67 (TPYVQLLGVPHKWP) lie on the Extracellular side of the membrane. The chain crosses the membrane as a helical span at residues 68-88 (SFIWLCGPVSGLLVQPSVGYF). The Cytoplasmic portion of the chain corresponds to 89 to 100 (SDRCTSRFGRRR). The helical transmembrane segment at 101 to 121 (PFIATGALLVAVSVVLIGYAA) threads the bilayer. The Extracellular segment spans residues 122–138 (DFGHSMGDKIDKPVKMR). The chain crosses the membrane as a helical span at residues 139-159 (AVVIFALGFWILDVANNTLQG). Topologically, residues 160–180 (PCRAFLGDLAAGDAQKTRTAN) are cytoplasmic. Residues 181–201 (AFFSFFMAVGNVLGYAAGSYT) form a helical membrane-spanning segment. The Extracellular portion of the chain corresponds to 202-223 (NLYKIFPFTMTKACDIYCANLK). A helical membrane pass occupies residues 224–244 (SCFFLSITLLLVVTIIALWYV). Residues 245 to 276 (EDKQWSPKADSDNEKTPFFGEIFGAFKVMKRP) lie on the Cytoplasmic side of the membrane. A helical transmembrane segment spans residues 277–297 (MWMLLIVTALNWIAWFPFLLY). At 298–323 (DTDWMGREVYGGDSKGDDKMKKLYNQ) the chain is on the extracellular side. The chain crosses the membrane as a helical span at residues 324-344 (GIHVGALGLMLNSIVLGVMSL). The Cytoplasmic segment spans residues 345 to 358 (GIEGISRKMGGAKR). The chain crosses the membrane as a helical span at residues 359–379 (LWGAVNIILAVCLAMTVLVTK). Residues 380–402 (KAEEHRRIAGPMALPTDGIRAGA) are Extracellular-facing. A helical transmembrane segment spans residues 403 to 423 (LTLFALLGIPLAITFSIPFAL). Residues 424–443 (ASIISSSSGAGQRLSLGVLN) are Cytoplasmic-facing. Residues 444-464 (MAIVIPQMIVSFGVGPIDALF) traverse the membrane as a helical segment. Topologically, residues 465-468 (GDGN) are extracellular. A helical membrane pass occupies residues 469-489 (LPGFVVGAIAAAVSSIVAFTV). Residues 490-491 (LP) lie on the Cytoplasmic side of the membrane.

The protein belongs to the glycoside-pentoside-hexuronide (GPH) cation symporter transporter (TC 2.A.2.4) family. Expressed in anthers.

It localises to the cell membrane. Its pathway is glycan biosynthesis; sucrose metabolism. In terms of biological role, may be responsible for the transport of glucosides into the cell, with the concomitant uptake of protons (symport system). Does not seem to transport sucrose. The polypeptide is Sucrose transport protein SUC7 (Arabidopsis thaliana (Mouse-ear cress)).